Reading from the N-terminus, the 366-residue chain is Phospho-N-acetylmuramoyl-pentapeptide-transferase (366 aa).

10 consecutive transmembrane segments (helical) span residues 27-47 (AALF…INSL), 71-91 (TPTM…LLWA), 93-113 (LSNV…AIGF), 134-154 (LGIE…TALA), 174-194 (FMIN…VGAG), 205-225 (GLAI…AYLA), 245-265 (LAVV…FNAP), 268-288 (AIFM…TVAV), 294-314 (IVMA…IIQV), and 343-363 (QVVI…LSTL).

This sequence belongs to the glycosyltransferase 4 family. MraY subfamily. It depends on Mg(2+) as a cofactor.

The protein localises to the cell inner membrane. It catalyses the reaction UDP-N-acetyl-alpha-D-muramoyl-L-alanyl-gamma-D-glutamyl-meso-2,6-diaminopimeloyl-D-alanyl-D-alanine + di-trans,octa-cis-undecaprenyl phosphate = di-trans,octa-cis-undecaprenyl diphospho-N-acetyl-alpha-D-muramoyl-L-alanyl-D-glutamyl-meso-2,6-diaminopimeloyl-D-alanyl-D-alanine + UMP. Its pathway is cell wall biogenesis; peptidoglycan biosynthesis. Catalyzes the initial step of the lipid cycle reactions in the biosynthesis of the cell wall peptidoglycan: transfers peptidoglycan precursor phospho-MurNAc-pentapeptide from UDP-MurNAc-pentapeptide onto the lipid carrier undecaprenyl phosphate, yielding undecaprenyl-pyrophosphoryl-MurNAc-pentapeptide, known as lipid I. This Rhizobium leguminosarum bv. trifolii (strain WSM2304) protein is Phospho-N-acetylmuramoyl-pentapeptide-transferase.